A 539-amino-acid polypeptide reads, in one-letter code: MAPKTVWGYFFIDYIPEPLQVSDKQRVVELKGEVARLFEDCNCKDVVERMNLVDVVQRLGIDHHFKEQIDTALKNIQGAEFNSSDLHEVSLRFRLLRQHGLWVPADQFDKFRRQEDGSFSSDIADDPKGLLGLYNAASLLIHGEEVLEEALLFARRHLESIRRGGGLHDSPYLSEQVGRSLKIPLPRTLKRLEAVSYIPEYSSADDTTYIHPEILELARLDFNLLQHVHQNELRTVTQWWKGLCDVIGPDYGRDRIVECYFWAFSMYYEEEHARARMILARLIMLASLLDDTFDDRATLQECRELNKAIERWDESDDISLLPECIQKFFLEVIRNFAEFEDELEAHEKYRVAYARKAYQLLSKSYLQEVEWCHQGYTPSFDDHVSVSTASAGIQVLCVGMLVGMGDAATKEVFEWMIGSNNRVVRACAEVTRFMDDMADFKRGKNKTDVATTVECYMKEQNVTGEVAFDKIGSFVEDAWKTLNQAALVGDRALLPVVQRVAGLAMSMMVFFHGKIDRYTDSEHLKETLEDLFVNHVPLC.

The Mg(2+) site is built by Asp290 and Asp294. Substrate is bound by residues Asp290, Asp294, and Arg432. Positions 290–294 (DDTFD) match the DDXXD motif motif.

This sequence belongs to the terpene synthase family. Monomer. The cofactor is Mg(2+). Requires Mn(2+) as cofactor.

The protein resides in the cytoplasm. It carries out the reaction (2E,6E)-farnesyl diphosphate = alpha-copaene + diphosphate. It catalyses the reaction (2E,6E)-farnesyl diphosphate = (+)-germacrene D + diphosphate. The catalysed reaction is (2E,6E)-farnesyl diphosphate = (-)-(E)-beta-caryophyllene + diphosphate. The enzyme catalyses (2E,6E)-farnesyl diphosphate = delta-cadinene + diphosphate. Its pathway is secondary metabolite biosynthesis; terpenoid biosynthesis. In terms of biological role, converts farnesyl diphosphate to the bicyclic olefins alpha-copaene, (E)-beta-caryophyllene, and to the macrocyclic sesquiterpene germacrene D. Also mediates the biosynthesis of minor sesquiterpene hydrocarbons including delta-cadinene. Involved in indirect defense by producing volatile signals attracting natural enemies of herbivores. This chain is Alpha-copaene synthase, found in Zea mays (Maize).